The following is a 138-amino-acid chain: Acidic phospholipase A2 BE-I-PLA2 (138 aa).

The first 16 residues, 1 to 16 (MRTLWIMAVLLVGVEG), serve as a signal peptide directing secretion. Intrachain disulfides connect Cys42/Cys131, Cys44/Cys60, Cys59/Cys111, Cys65/Cys138, Cys66/Cys104, Cys73/Cys97, and Cys91/Cys102. The Ca(2+) site is built by Tyr43, Gly45, and Gly47. His63 is a catalytic residue. Asp64 is a Ca(2+) binding site. The active site involves Asp105.

The protein belongs to the phospholipase A2 family. Group II subfamily. D49 sub-subfamily. Ca(2+) is required as a cofactor. Expressed by the venom gland.

The protein localises to the secreted. It catalyses the reaction a 1,2-diacyl-sn-glycero-3-phosphocholine + H2O = a 1-acyl-sn-glycero-3-phosphocholine + a fatty acid + H(+). Snake venom phospholipase A2 that shows a potent inhibition of human platelet aggregation. This inhibition is concentration-dependent when aggregation is induced by collagen, and concentration-independent when aggregation is induced by arachidonic acid. In human umbilical-cord vein endothelial cells, this toxin stimulates endothelial cells to release prostaglandin I(2), suggesting an increase of its potential anti-platelet activity in vivo. PLA2 catalyzes the calcium-dependent hydrolysis of the 2-acyl groups in 3-sn-phosphoglycerides. This Bothrops erythromelas (Caatinga lance head) protein is Acidic phospholipase A2 BE-I-PLA2.